The sequence spans 149 residues: Endoribonuclease YbeY (149 aa).

Residues H116, H120, and H126 each coordinate Zn(2+).

This sequence belongs to the endoribonuclease YbeY family. Zn(2+) serves as cofactor.

It localises to the cytoplasm. Its function is as follows. Single strand-specific metallo-endoribonuclease involved in late-stage 70S ribosome quality control and in maturation of the 3' terminus of the 16S rRNA. The polypeptide is Endoribonuclease YbeY (Nocardioides sp. (strain ATCC BAA-499 / JS614)).